Reading from the N-terminus, the 367-residue chain is Cellular tumor antigen p53 (367 aa).

Positions 1-47 (MEEENISLPLSQDTFQDLWDNVSAPPISTIQTAALENEAWPAERQMN) are transcription activation (acidic). The DNA-binding element occupies 86-273 (DYPGEYGFKL…KTEETNSTKM (188 aa)). Zn(2+)-binding residues include cysteine 160, histidine 163, cysteine 219, and cysteine 223. Positions 254 to 261 (RVCACPGR) are interaction with DNA. Over residues 262 to 279 (DRKTEETNSTKMQNDAKD) the composition is skewed to basic and acidic residues. Disordered stretches follow at residues 262–306 (DRKT…AEED) and 332–367 (DLLE…SDSD). The Bipartite nuclear localization signal signature appears at 282 to 300 (KRKSVPTPDSTTIKKSKTA). Over residues 291–302 (STTIKKSKTASS) the composition is skewed to low complexity. Residues 308 to 337 (NEVYTLQIRGRKRYEMLKKINDGLDLLENK) form an oligomerization region. A Nuclear export signal motif is present at residues 322–333 (EMLKKINDGLDL). The interval 342–363 (ATHRPDGPIPPSGKRLLHRGEK) is basic (repression of DNA-binding).

It belongs to the p53 family. As to quaternary structure, binds DNA as a homotetramer. Zn(2+) is required as a cofactor.

The protein resides in the cytoplasm. Its subcellular location is the nucleus. Functionally, multifunctional transcription factor that induces cell cycle arrest, DNA repair or apoptosis upon binding to its target DNA sequence. Acts as a tumor suppressor in many tumor types; induces growth arrest or apoptosis depending on the physiological circumstances and cell type. Negatively regulates cell division by controlling expression of a set of genes required for this process. One of the activated genes is an inhibitor of cyclin-dependent kinases. Apoptosis induction seems to be mediated either by stimulation of BAX and FAS antigen expression, or by repression of Bcl-2 expression. The protein is Cellular tumor antigen p53 (tp53) of Tetraodon miurus (Congo puffer).